The chain runs to 657 residues: Probable serine/threonine-protein kinase CA_C1728 (657 aa).

The Protein kinase domain occupies 10–274 (YKIEEEIGVG…ELSNVKNNYV (265 aa)). ATP-binding positions include 16–24 (IGVGGTAVV) and Lys-39. The Proton acceptor role is filled by Asp-143. A disordered region spans residues 286–334 (PAQIQNESNPNNKLDNDDTYYNGEPYNKEQPQEEPQEENEEPKNKIKGN). A compositionally biased stretch (polar residues) spans 288 to 298 (QIQNESNPNNK). 3 PASTA domains span residues 375 to 441 (SVSK…DISS), 443 to 509 (DTDQ…VISR), and 512 to 577 (EVKK…VIGR). A disordered region spans residues 581–657 (TAVQPPNNNN…TNTPNGTGQK (77 aa)). Low complexity-rich tracts occupy residues 584-600 (QPPNNNNGNGNQNQNQN), 613-637 (PTGGNNDNQNQNNTTNPNGTQPAGG), and 645-657 (GNVTNTPNGTGQK).

It belongs to the protein kinase superfamily. Ser/Thr protein kinase family.

The enzyme catalyses L-seryl-[protein] + ATP = O-phospho-L-seryl-[protein] + ADP + H(+). It catalyses the reaction L-threonyl-[protein] + ATP = O-phospho-L-threonyl-[protein] + ADP + H(+). This is Probable serine/threonine-protein kinase CA_C1728 from Clostridium acetobutylicum (strain ATCC 824 / DSM 792 / JCM 1419 / IAM 19013 / LMG 5710 / NBRC 13948 / NRRL B-527 / VKM B-1787 / 2291 / W).